Here is a 252-residue protein sequence, read N- to C-terminus: 3-dehydroquinate dehydratase (252 aa).

3-dehydroquinate contacts are provided by residues S21, 46–48, and R82; that span reads EWR. H143 (proton donor/acceptor) is an active-site residue. K170 (schiff-base intermediate with substrate) is an active-site residue. The 3-dehydroquinate site is built by R213, S232, and Q236.

The protein belongs to the type-I 3-dehydroquinase family. Homodimer.

It catalyses the reaction 3-dehydroquinate = 3-dehydroshikimate + H2O. It participates in metabolic intermediate biosynthesis; chorismate biosynthesis; chorismate from D-erythrose 4-phosphate and phosphoenolpyruvate: step 3/7. Involved in the third step of the chorismate pathway, which leads to the biosynthesis of aromatic amino acids. Catalyzes the cis-dehydration of 3-dehydroquinate (DHQ) and introduces the first double bond of the aromatic ring to yield 3-dehydroshikimate. The polypeptide is 3-dehydroquinate dehydratase (Escherichia coli O9:H4 (strain HS)).